Reading from the N-terminus, the 128-residue chain is Methylglyoxal synthase (128 aa).

The MGS-like domain occupies 1 to 128; that stretch reads MRIALIAHDR…MQDHPGNRQA (128 aa). Substrate contacts are provided by residues His8, Lys12, 34 to 37, and 54 to 55; these read TGTT and SG. Asp60 functions as the Proton donor/acceptor in the catalytic mechanism. A substrate-binding site is contributed by His87.

The protein belongs to the methylglyoxal synthase family.

The enzyme catalyses dihydroxyacetone phosphate = methylglyoxal + phosphate. Catalyzes the formation of methylglyoxal from dihydroxyacetone phosphate. In Moorella thermoacetica (strain ATCC 39073 / JCM 9320), this protein is Methylglyoxal synthase.